We begin with the raw amino-acid sequence, 143 residues long: Nucleoside diphosphate kinase (143 aa).

Positions 11, 59, 87, 93, 104, and 114 each coordinate ATP. Catalysis depends on His-117, which acts as the Pros-phosphohistidine intermediate.

Belongs to the NDK family. In terms of assembly, homotetramer. Requires Mg(2+) as cofactor.

Its subcellular location is the cytoplasm. The enzyme catalyses a 2'-deoxyribonucleoside 5'-diphosphate + ATP = a 2'-deoxyribonucleoside 5'-triphosphate + ADP. It carries out the reaction a ribonucleoside 5'-diphosphate + ATP = a ribonucleoside 5'-triphosphate + ADP. Major role in the synthesis of nucleoside triphosphates other than ATP. The ATP gamma phosphate is transferred to the NDP beta phosphate via a ping-pong mechanism, using a phosphorylated active-site intermediate. The polypeptide is Nucleoside diphosphate kinase (Escherichia coli O7:K1 (strain IAI39 / ExPEC)).